The sequence spans 223 residues: Probable tRNA-splicing endonuclease subunit tsp-1 (223 aa).

The interval 1–55 (MESGSTPPTDKQIRENEQDGTGHQGKLLARPTSTRQQQQQQQQQPSHSVSQSVSQ) is disordered. Residues 30–55 (RPTSTRQQQQQQQQQPSHSVSQSVSQ) are compositionally biased toward low complexity.

This sequence belongs to the SEN15 family. In terms of assembly, tRNA splicing endonuclease is a heterotetramer composed of tsp-2/sen2, tsp-1/sen15, tsp-4/sen34 and tsp-5/sen54. Interacts directly with tsp-4/sen34.

Functionally, non-catalytic subunit of the tRNA-splicing endonuclease complex, a complex responsible for identification and cleavage of the splice sites in pre-tRNA. It cleaves pre-tRNA at the 5' and 3' splice sites to release the intron. The products are an intron and two tRNA half-molecules bearing 2',3' cyclic phosphate and 5'-OH termini. There are no conserved sequences at the splice sites, but the intron is invariably located at the same site in the gene, placing the splice sites an invariant distance from the constant structural features of the tRNA body. The protein is Probable tRNA-splicing endonuclease subunit tsp-1 (tsp-1) of Neurospora crassa (strain ATCC 24698 / 74-OR23-1A / CBS 708.71 / DSM 1257 / FGSC 987).